We begin with the raw amino-acid sequence, 548 residues long: Glucan endo-1,3-beta-glucosidase (548 aa).

Residues M1–A36 constitute a signal peptide (tat-type signal). The possesses beta-glucanase activity, but is unable to lyse viable cells stretch occupies residues V37–S430. Residues P38–P396 enclose the GH64 domain. Residue E153 is the Proton donor of the active site. D169 serves as the catalytic Proton acceptor. In terms of domain architecture, Ricin B-type lectin spans G422–L548. The interval G472 to L548 is essential for the lytic activity, but not for the beta-glucanase function.

The protein belongs to the glycosyl hydrolase 64 family. Post-translationally, predicted to be exported by the Tat system. The position of the signal peptide cleavage has been experimentally proven.

It is found in the periplasm. The enzyme catalyses Hydrolysis of (1-&gt;3)-beta-D-glucosidic linkages in (1-&gt;3)-beta-D-glucans.. Functionally, lysis of cellular walls containing beta-1,3-glucans. Implicated in the defense against fungal pathogens. The sequence is that of Glucan endo-1,3-beta-glucosidase from Cellulosimicrobium cellulans (Arthrobacter luteus).